A 485-amino-acid chain; its full sequence is Glutamyl-tRNA(Gln) amidotransferase subunit A (485 aa).

Active-site charge relay system residues include K78 and S153. S177 functions as the Acyl-ester intermediate in the catalytic mechanism.

It belongs to the amidase family. GatA subfamily. As to quaternary structure, heterotrimer of A, B and C subunits.

The enzyme catalyses L-glutamyl-tRNA(Gln) + L-glutamine + ATP + H2O = L-glutaminyl-tRNA(Gln) + L-glutamate + ADP + phosphate + H(+). In terms of biological role, allows the formation of correctly charged Gln-tRNA(Gln) through the transamidation of misacylated Glu-tRNA(Gln) in organisms which lack glutaminyl-tRNA synthetase. The reaction takes place in the presence of glutamine and ATP through an activated gamma-phospho-Glu-tRNA(Gln). The polypeptide is Glutamyl-tRNA(Gln) amidotransferase subunit A (Bacillus cereus (strain AH820)).